The primary structure comprises 258 residues: UPF0246 protein YaaA (258 aa).

The protein belongs to the UPF0246 family.

The sequence is that of UPF0246 protein YaaA from Escherichia coli (strain K12 / MC4100 / BW2952).